The chain runs to 337 residues: F420-dependent glucose-6-phosphate dehydrogenase (337 aa).

Residue Asp-40 participates in coenzyme F420-(gamma-Glu)n binding. The active-site Proton donor is His-41. Residues Thr-77 and Thr-108–Gly-109 each bind coenzyme F420-(gamma-Glu)n. The active-site Proton acceptor is Glu-110. Coenzyme F420-(gamma-Glu)n contacts are provided by residues Asn-113, Gly-178–Gly-179, and Val-181–Val-182. Substrate is bound by residues Thr-196, Lys-199, Lys-260, and Arg-284.

The protein belongs to the F420-dependent glucose-6-phosphate dehydrogenase family. Homodimer.

It carries out the reaction oxidized coenzyme F420-(gamma-L-Glu)(n) + D-glucose 6-phosphate + H(+) = 6-phospho-D-glucono-1,5-lactone + reduced coenzyme F420-(gamma-L-Glu)(n). Its function is as follows. Catalyzes the coenzyme F420-dependent oxidation of glucose 6-phosphate (G6P) to 6-phosphogluconolactone. The sequence is that of F420-dependent glucose-6-phosphate dehydrogenase from Rhodococcus hoagii (strain 103S) (Rhodococcus equi).